Reading from the N-terminus, the 148-residue chain is MAETKTKVTLVGTVLAKPGTEFVYEGESPECETCKVKKACNNLNRGHRYRIITVRSTHHDCAVHLNGATAVEVMEAPVTMLISADMAMINSKIKVEFSCNKTECRSYSLCRPDGVVEGEKYVVADVLGNASDICGKGRALKLVEIRPA.

The protein belongs to the UPF0179 family.

In Methanoregula boonei (strain DSM 21154 / JCM 14090 / 6A8), this protein is UPF0179 protein Mboo_1959.